The primary structure comprises 505 residues: L-arabinose isomerase (505 aa).

Residues glutamate 310, glutamate 337, histidine 354, and histidine 453 each coordinate Mn(2+).

It belongs to the arabinose isomerase family. Mn(2+) is required as a cofactor.

It carries out the reaction beta-L-arabinopyranose = L-ribulose. It functions in the pathway carbohydrate degradation; L-arabinose degradation via L-ribulose; D-xylulose 5-phosphate from L-arabinose (bacterial route): step 1/3. Catalyzes the conversion of L-arabinose to L-ribulose. The polypeptide is L-arabinose isomerase (Clavibacter sepedonicus (Clavibacter michiganensis subsp. sepedonicus)).